The following is a 260-amino-acid chain: Probable 6-oxopurine nucleoside phosphorylase (260 aa).

Phosphate contacts are provided by residues Ser-9 and 49–50 (RH). Met-182 serves as a coordination point for substrate. Thr-183 lines the phosphate pocket. A substrate-binding site is contributed by 206–208 (NMA).

Belongs to the PNP/MTAP phosphorylase family. MTAP subfamily. As to quaternary structure, homohexamer. Dimer of a homotrimer.

It catalyses the reaction a purine D-ribonucleoside + phosphate = a purine nucleobase + alpha-D-ribose 1-phosphate. Its pathway is purine metabolism; purine nucleoside salvage. Its function is as follows. Purine nucleoside phosphorylase which is highly specific for 6-oxopurine nucleosides. Cleaves guanosine or inosine to respective bases and sugar-1-phosphate molecules. Involved in purine salvage. The protein is Probable 6-oxopurine nucleoside phosphorylase of Moorella thermoacetica (strain ATCC 39073 / JCM 9320).